The following is a 198-amino-acid chain: MHYPEPISKLIDSFMKLPGIGPKTAQRLAFHTLDMKEDDVVKFAKALVDVKRELTYCSVCGHITENDPCYICEDKQRDRSVICVVEDDKDVIAMEKMREYKGLYHVLHGSISPMDGIGPEDINIPALVERLKNDEVKELILAMNPNLEGESTAMYISRLVKPIGIKVTRLAQGLSVGGDLEYADEVTLSKAIAGRTEM.

The C4-type zinc-finger motif lies at Cys-57–Cys-72. Residues Ser-80 to Ser-175 enclose the Toprim domain.

The protein belongs to the RecR family.

Functionally, may play a role in DNA repair. It seems to be involved in an RecBC-independent recombinational process of DNA repair. It may act with RecF and RecO. The chain is Recombination protein RecR from Staphylococcus epidermidis (strain ATCC 35984 / DSM 28319 / BCRC 17069 / CCUG 31568 / BM 3577 / RP62A).